The chain runs to 109 residues: Large ribosomal subunit protein uL22 (109 aa).

The protein belongs to the universal ribosomal protein uL22 family. Part of the 50S ribosomal subunit.

This protein binds specifically to 23S rRNA; its binding is stimulated by other ribosomal proteins, e.g. L4, L17, and L20. It is important during the early stages of 50S assembly. It makes multiple contacts with different domains of the 23S rRNA in the assembled 50S subunit and ribosome. Functionally, the globular domain of the protein is located near the polypeptide exit tunnel on the outside of the subunit, while an extended beta-hairpin is found that lines the wall of the exit tunnel in the center of the 70S ribosome. The protein is Large ribosomal subunit protein uL22 of Chromobacterium violaceum (strain ATCC 12472 / DSM 30191 / JCM 1249 / CCUG 213 / NBRC 12614 / NCIMB 9131 / NCTC 9757 / MK).